The following is an 87-amino-acid chain: uncharacterized protein (87 aa).

The signal sequence occupies residues M1–A19. The chain crosses the membrane as a helical span at residues L39–L59.

To M.leprae ML2453.

Its subcellular location is the membrane. This is an uncharacterized protein from Mycobacterium bovis (strain ATCC BAA-935 / AF2122/97).